The sequence spans 156 residues: Small ribosomal subunit protein uS7 (156 aa).

It belongs to the universal ribosomal protein uS7 family. In terms of assembly, part of the 30S ribosomal subunit. Contacts proteins S9 and S11.

One of the primary rRNA binding proteins, it binds directly to 16S rRNA where it nucleates assembly of the head domain of the 30S subunit. Is located at the subunit interface close to the decoding center, probably blocks exit of the E-site tRNA. The sequence is that of Small ribosomal subunit protein uS7 from Nitrosomonas eutropha (strain DSM 101675 / C91 / Nm57).